A 326-amino-acid polypeptide reads, in one-letter code: Nuclear egress protein 1 (326 aa).

The CCCH-type zinc-finger motif lies at 115–244 (CLSLSGMGYY…YAVFPTKSVH (130 aa)).

This sequence belongs to the herpesviridae NEC1 protein family. Forms a heterohexameric complex with NEC2. Interacts with capsid vertex specific component 2/CVC2; this interaction directs the capsid to the host inner nuclear membrane to initiate budding. Phosphorylated at serine residues in the N-terminus. This phosphorylation regulates the localization within the inner nuclear membrane.

It localises to the host nucleus inner membrane. Functionally, plays an essential role in virion nuclear egress, the first step of virion release from infected cell. Within the host nucleus, NEC1 interacts with the newly formed capsid through the vertexes and directs it to the inner nuclear membrane by associating with NEC2. Induces the budding of the capsid at the inner nuclear membrane as well as its envelopment into the perinuclear space. There, the NEC1/NEC2 complex promotes the fusion of the enveloped capsid with the outer nuclear membrane and the subsequent release of the viral capsid into the cytoplasm where it will reach the secondary budding sites in the host Golgi or trans-Golgi network. The chain is Nuclear egress protein 1 from Equine herpesvirus 1 (strain Ab4p) (EHV-1).